The chain runs to 594 residues: UvrABC system protein C (594 aa).

One can recognise a GIY-YIG domain in the interval 13-99 (NGSGVYQYFD…IKQLKPKYNI (87 aa)). In terms of domain architecture, UVR spans 205-240 (DKLIKELQLKMDRLSSNLRFEEALIYRDRISKIQKI).

It belongs to the UvrC family. Interacts with UvrB in an incision complex.

The protein resides in the cytoplasm. In terms of biological role, the UvrABC repair system catalyzes the recognition and processing of DNA lesions. UvrC both incises the 5' and 3' sides of the lesion. The N-terminal half is responsible for the 3' incision and the C-terminal half is responsible for the 5' incision. This is UvrABC system protein C from Helicobacter acinonychis (strain Sheeba).